A 231-amino-acid chain; its full sequence is CLAVATA3/ESR (CLE)-related protein 4B-1 (231 aa).

The first 21 residues, 1–21 (MATNTMLCLLILSVVLALAFA), serve as a signal peptide directing secretion. The interval 21-83 (ATNKKGDEEP…SNLLPNNNWM (63 aa)) is required for secretion from the host cytoplasm to the host apoplasm. N32 carries an N-linked (GlcNAc...) asparagine glycan. The disordered stretch occupies residues 116–231 (RKTGMHSQRH…APAGPDPIHH (116 aa)). Basic and acidic residues-rich tracts occupy residues 125–137 (HHEETTLEQEKRV) and 144–221 (PIHH…EKRG). The stretch at 127 to 135 (EETTLEQEK) is one A-1 repeat. Positions 127–219 (EETTLEQEKR…HEETTFEQEK (93 aa)) are 5 X approximate repeat A. A CLE-1 repeat occupies 136–147 (RVAGAGPDPIHH). The interval 136-231 (RVAGAGPDPI…APAGPDPIHH (96 aa)) is 5 X approximate repeat CLE. The A-2 repeat unit spans residues 148 to 156 (QDTTLEQEK). The CLE-2 repeat unit spans residues 157–168 (RAVPAGPDPKHH). The A-3 repeat unit spans residues 169–177 (EETTLEQEK). The CLE-3 repeat unit spans residues 178-189 (RAVPAGPDPKHH). The A-4 repeat unit spans residues 190–198 (EETTLEQEK). The stretch at 199-210 (RAVPAGPDPKHH) is one CLE-4 repeat. Residues 211 to 219 (EETTFEQEK) form an A-5 repeat. One copy of the CLE-5 repeat lies at 220 to 231 (RGAPAGPDPIHH).

Belongs to the CLV3/ESR signal peptide family. Highly expressed exclusively within the dorsal esophageal gland cell during syncytium formation in host plants.

Its subcellular location is the secreted. The protein resides in the host cytoplasm. It is found in the host extracellular space. The protein localises to the extracellular space. It localises to the apoplast. Its function is as follows. Mimics host plant CLE extracellular signal peptides that regulate cell fate. May play a role in the differentiation or division of feeding cells (syncytia) induced in plant roots during infection. This chain is CLAVATA3/ESR (CLE)-related protein 4B-1 (CLE-4B-1), found in Globodera rostochiensis (Golden nematode worm).